Consider the following 296-residue polypeptide: Protoheme IX farnesyltransferase 2 (296 aa).

The next 9 membrane-spanning stretches (helical) occupy residues 7-27, 36-56, 83-103, 108-128, 134-154, 163-183, 207-227, 229-249, and 265-285; these read LLVA…GGYF, PMLL…GCVL, LKAA…LLWW, LTTA…SLWF, YGTL…YCAV, ASLL…IAIF, IHIV…CLGG, AGYG…AIAL, and FAFS…DFQV.

This sequence belongs to the UbiA prenyltransferase family. Protoheme IX farnesyltransferase subfamily.

It localises to the cell inner membrane. It catalyses the reaction heme b + (2E,6E)-farnesyl diphosphate + H2O = Fe(II)-heme o + diphosphate. It functions in the pathway porphyrin-containing compound metabolism; heme O biosynthesis; heme O from protoheme: step 1/1. In terms of biological role, converts heme B (protoheme IX) to heme O by substitution of the vinyl group on carbon 2 of heme B porphyrin ring with a hydroxyethyl farnesyl side group. This is Protoheme IX farnesyltransferase 2 from Pseudomonas aeruginosa (strain UCBPP-PA14).